A 359-amino-acid chain; its full sequence is Phospho-N-acetylmuramoyl-pentapeptide-transferase (359 aa).

The next 10 helical transmembrane spans lie at 26 to 46 (TIYA…WLIR), 75 to 95 (GGVL…NLTI), 97 to 117 (YVWL…ADDY), 134 to 154 (LACE…KPGF), 166 to 186 (VLPD…VGAA), 197 to 217 (GLAI…AYFA), 233 to 253 (GVGE…GFLW), 261 to 281 (VFMG…LAIV), 286 to 306 (ILLA…IFQV), and 336 to 356 (KVIV…ISTL).

Belongs to the glycosyltransferase 4 family. MraY subfamily. Requires Mg(2+) as cofactor.

The protein resides in the cell inner membrane. The catalysed reaction is UDP-N-acetyl-alpha-D-muramoyl-L-alanyl-gamma-D-glutamyl-meso-2,6-diaminopimeloyl-D-alanyl-D-alanine + di-trans,octa-cis-undecaprenyl phosphate = di-trans,octa-cis-undecaprenyl diphospho-N-acetyl-alpha-D-muramoyl-L-alanyl-D-glutamyl-meso-2,6-diaminopimeloyl-D-alanyl-D-alanine + UMP. It functions in the pathway cell wall biogenesis; peptidoglycan biosynthesis. In terms of biological role, catalyzes the initial step of the lipid cycle reactions in the biosynthesis of the cell wall peptidoglycan: transfers peptidoglycan precursor phospho-MurNAc-pentapeptide from UDP-MurNAc-pentapeptide onto the lipid carrier undecaprenyl phosphate, yielding undecaprenyl-pyrophosphoryl-MurNAc-pentapeptide, known as lipid I. This chain is Phospho-N-acetylmuramoyl-pentapeptide-transferase, found in Syntrophus aciditrophicus (strain SB).